A 561-amino-acid polypeptide reads, in one-letter code: MKYIVMQDAFFVVLLLVLAVPLGIYMYKVMIGEKVFLSRVLEPVERFGYRLMGVSEVGMSAKRYAVSVLAFSAVGFVFVMAVLMLQGFLPLNPEGMKGLSFSLAFNTAASFVSNTNWQAYSGEAALSYFSQSIGLTVQNFVSAATGIAVLFAVIRGFIWKKQKTIGNFWQDLFRVTLYILLPLSLILALLLVSQGVVQSFADYSVVETLENGAKQLIPLGPAASQIAIKQLGTNGGGFFGANSAFPFENPSSFTNLIEMLAILLIPVALVVMFGRAVKDSKQGRAIMTAMMIVFVIGVVAITISEQFAGPHYQGVATSGSMEGKEVRFGVGGSSLFAASTTAASNGAVNAMHDSLTPLGGLVPMFFMQLGEVVFGGVGSGLYGMIGFIILTVFIAGLLVGRTPEYLGKKIEPYDMKMVCLLILVPPLLTLFGTAVAVMMPSVQASVSASGAHGFSEVLYAFTSMGNNNGSAFAGFAADTTFTNMVGAVMMLLARFIPLVAALYLAQNMAGKSSVAASSGTLSTKNGMFIGLLIGVVVLVGALSFLPALALGPIADFFTTFK.

10 consecutive transmembrane segments (helical) span residues 4 to 24 (IVMQ…PLGI), 65 to 85 (AVSV…VLML), 133 to 153 (IGLT…LFAV), 177 to 197 (LYIL…QGVV), 253 to 273 (FTNL…VVMF), 285 to 305 (AIMT…TISE), 380 to 400 (GLYG…LLVG), 417 to 437 (MVCL…AVAV), 484 to 504 (MVGA…ALYL), and 528 to 548 (FIGL…LPAL).

Belongs to the KdpA family. In terms of assembly, the system is composed of three essential subunits: KdpA, KdpB and KdpC.

Its subcellular location is the cell membrane. In terms of biological role, part of the high-affinity ATP-driven potassium transport (or Kdp) system, which catalyzes the hydrolysis of ATP coupled with the electrogenic transport of potassium into the cytoplasm. This subunit binds the extracellular potassium ions and delivers the ions to the membrane domain of KdpB through an intramembrane tunnel. This chain is Potassium-transporting ATPase potassium-binding subunit, found in Listeria monocytogenes serotype 4b (strain CLIP80459).